We begin with the raw amino-acid sequence, 865 residues long: General transcription factor 3C polypeptide 5 (865 aa).

Disordered regions lie at residues Met1–Ser21, Arg111–Phe163, Asn191–Ile215, Gln391–Gly522, and Asp669–Glu865. 5 stretches are compositionally biased toward low complexity: residues Lys7–Ser21, Gln115–Gln126, Gln140–Gln158, Asp199–Ser210, and Ser401–Lys411. Basic and acidic residues-rich tracts occupy residues Asp412 to Glu439 and Asn448 to Asp489. 2 stretches are compositionally biased toward low complexity: residues Glu508–Glu521 and Arg677–Thr696. 3 stretches are compositionally biased toward basic and acidic residues: residues Gln697–Pro713, Gln757–Lys766, and Met773–Glu786. Composition is skewed to acidic residues over residues Asp800–Gly820 and Glu839–Glu865.

The protein belongs to the TFIIIC subunit 5 family. As to quaternary structure, part of the TFIIIC complex.

It is found in the nucleus. Involved in RNA polymerase III-mediated transcription. Integral, tightly associated component of the DNA-binding TFIIIC2 subcomplex that directly binds tRNA and virus-associated RNA promoters. This Dictyostelium discoideum (Social amoeba) protein is General transcription factor 3C polypeptide 5 (gtf3c5).